We begin with the raw amino-acid sequence, 145 residues long: Lysozyme-like protein 4 (145 aa).

The first 19 residues, 1 to 19 (MKASVVLSLIGYLVVPSDT), serve as a signal peptide directing secretion. Residues 20-145 (AVLGRCVVAK…LARWLDGCKL (126 aa)) form the C-type lysozyme domain. 4 disulfide bridges follow: Cys-25–Cys-143, Cys-49–Cys-130, Cys-84–Cys-95, and Cys-91–Cys-109. Residue Glu-54 is part of the active site.

The protein belongs to the glycosyl hydrolase 22 family. As to quaternary structure, monomer.

The protein localises to the secreted. It is found in the cytoplasmic vesicle. Its subcellular location is the secretory vesicle. It localises to the acrosome. The protein resides in the cell projection. The protein localises to the cilium. It is found in the flagellum. In terms of biological role, may be involved in fertilization. Has no detectable bacteriolytic and lysozyme activities in vitro. The sequence is that of Lysozyme-like protein 4 (LYZL4) from Bos taurus (Bovine).